Here is a 38-residue protein sequence, read N- to C-terminus: Potassium channel toxin alpha-KTx 3.12 (38 aa).

Intrachain disulfides connect Cys-8–Cys-28, Cys-14–Cys-33, and Cys-18–Cys-35. Lysine amide is present on Lys-38.

The protein belongs to the short scorpion toxin superfamily. Potassium channel inhibitor family. Alpha-KTx 03 subfamily. In terms of tissue distribution, expressed by the venom gland.

The protein resides in the secreted. In terms of biological role, potent inhibitor of voltage-dependent potassium channels, with a preference for Kv1.3/KCNA3 versus Kv1.2/KCNA2. This is Potassium channel toxin alpha-KTx 3.12 from Androctonus amoreuxi (African fattail scorpion).